The primary structure comprises 332 residues: Ketol-acid reductoisomerase (NADP(+)) (332 aa).

The region spanning M1–T182 is the KARI N-terminal Rossmann domain. NADP(+) contacts are provided by residues Y25–Q28, K49, S51, and D83–Q86. Residue H108 is part of the active site. G134 lines the NADP(+) pocket. In terms of domain architecture, KARI C-terminal knotted spans T183 to L328. D191, E195, E227, and E231 together coordinate Mg(2+). S252 serves as a coordination point for substrate.

The protein belongs to the ketol-acid reductoisomerase family. Mg(2+) serves as cofactor.

The enzyme catalyses (2R)-2,3-dihydroxy-3-methylbutanoate + NADP(+) = (2S)-2-acetolactate + NADPH + H(+). It catalyses the reaction (2R,3R)-2,3-dihydroxy-3-methylpentanoate + NADP(+) = (S)-2-ethyl-2-hydroxy-3-oxobutanoate + NADPH + H(+). The protein operates within amino-acid biosynthesis; L-isoleucine biosynthesis; L-isoleucine from 2-oxobutanoate: step 2/4. Its pathway is amino-acid biosynthesis; L-valine biosynthesis; L-valine from pyruvate: step 2/4. Its function is as follows. Involved in the biosynthesis of branched-chain amino acids (BCAA). Catalyzes an alkyl-migration followed by a ketol-acid reduction of (S)-2-acetolactate (S2AL) to yield (R)-2,3-dihydroxy-isovalerate. In the isomerase reaction, S2AL is rearranged via a Mg-dependent methyl migration to produce 3-hydroxy-3-methyl-2-ketobutyrate (HMKB). In the reductase reaction, this 2-ketoacid undergoes a metal-dependent reduction by NADPH to yield (R)-2,3-dihydroxy-isovalerate. The protein is Ketol-acid reductoisomerase (NADP(+)) of Methanothrix thermoacetophila (strain DSM 6194 / JCM 14653 / NBRC 101360 / PT) (Methanosaeta thermophila).